Consider the following 439-residue polypeptide: tRNA-2-methylthio-N(6)-dimethylallyladenosine synthase (439 aa).

The 118-residue stretch at 2-119 folds into the MTTase N-terminal domain; the sequence is KKLYLKTHGC…LPDLLDSVIQ (118 aa). [4Fe-4S] cluster contacts are provided by cysteine 11, cysteine 48, cysteine 82, cysteine 156, cysteine 160, and cysteine 163. The region spanning 142–374 is the Radical SAM core domain; that stretch reads RAEGPSAFVS…QNRINVKAAE (233 aa). In terms of domain architecture, TRAM spans 377 to 439; sequence QSMVGTQQRI…RPYSLWGEIC (63 aa).

Belongs to the methylthiotransferase family. MiaB subfamily. In terms of assembly, monomer. [4Fe-4S] cluster serves as cofactor.

Its subcellular location is the cytoplasm. It carries out the reaction N(6)-dimethylallyladenosine(37) in tRNA + (sulfur carrier)-SH + AH2 + 2 S-adenosyl-L-methionine = 2-methylsulfanyl-N(6)-dimethylallyladenosine(37) in tRNA + (sulfur carrier)-H + 5'-deoxyadenosine + L-methionine + A + S-adenosyl-L-homocysteine + 2 H(+). Functionally, catalyzes the methylthiolation of N6-(dimethylallyl)adenosine (i(6)A), leading to the formation of 2-methylthio-N6-(dimethylallyl)adenosine (ms(2)i(6)A) at position 37 in tRNAs that read codons beginning with uridine. The sequence is that of tRNA-2-methylthio-N(6)-dimethylallyladenosine synthase from Coxiella burnetii (strain Dugway 5J108-111).